A 204-amino-acid polypeptide reads, in one-letter code: Proteasome subunit beta 2 (204 aa).

Residues 1-6 constitute a propeptide, removed in mature form; by autocatalysis; sequence MEVLPG. Residue Thr-7 is the Nucleophile of the active site.

This sequence belongs to the peptidase T1B family. The 20S proteasome core is composed of 14 alpha and 14 beta subunits that assemble into four stacked heptameric rings, resulting in a barrel-shaped structure. The two inner rings, each composed of seven catalytic beta subunits, are sandwiched by two outer rings, each composed of seven alpha subunits. The catalytic chamber with the active sites is on the inside of the barrel. Has a gated structure, the ends of the cylinder being occluded by the N-termini of the alpha-subunits. Is capped at one or both ends by the proteasome regulatory ATPase, PAN.

Its subcellular location is the cytoplasm. The catalysed reaction is Cleavage of peptide bonds with very broad specificity.. The formation of the proteasomal ATPase PAN-20S proteasome complex, via the docking of the C-termini of PAN into the intersubunit pockets in the alpha-rings, triggers opening of the gate for substrate entry. Interconversion between the open-gate and close-gate conformations leads to a dynamic regulation of the 20S proteasome proteolysis activity. Functionally, component of the proteasome core, a large protease complex with broad specificity involved in protein degradation. In Thermofilum pendens (strain DSM 2475 / Hrk 5), this protein is Proteasome subunit beta 2.